Here is a 386-residue protein sequence, read N- to C-terminus: Putative acid--amine ligase YgiC (386 aa).

An ATP-binding site is contributed by Arg-100–Asp-102. Mg(2+) is bound by residues Asp-102, Glu-115, and Asn-117. ATP-binding positions include Lys-267, Lys-302, Gly-309, Gln-336, and Leu-371–Thr-373.

This sequence belongs to the glutathionylspermidine synthase preATP-grasp family.

Functionally, may be a ligase forming an amide bond. Shows ATPase activity. The protein is Putative acid--amine ligase YgiC (ygiC) of Escherichia coli O157:H7.